The primary structure comprises 490 residues: MSDDDFMQDSDQEYDFEYEDDEEEDTGDVDIENKYYNAKQTKTSDPEEALQEFLSIPPLEQEKGDWGFKALKQAIKLEFKLKRYQEATEHYEELLTYVKSAVTRNYSEKSIDNMLNYIEKGYDDPKAVQCIEKFYSLTLQCFQSTNNERLWLKTNIKLARLLLDRKDYHAVARKLRELHNACRKSDGTDDPSKGTYSLEIYALEIQMYSETRNNNQLKVLYQKALKVRSAVPHPKIQGVIRECGGKMHMSEENWKEAQSDFFEAFRNYDEAGDLRRIQVLKYLLLTTMLMKSDINPFDSQEMKPYRNDPRIFAMTELVDAYQRDDIYRYEDVLQKNTDLLADPFIAENIDEVTRNMRTKGVVKLIAPYTRMRISWLAERLRITEPEVMDILSFLIVDGRVKGRIDEHKGVLELESREDADHVQAITVLSEAVGNLFNAVFKSTDGFQPGQGDFMNSMADQSADIGSLDDTMRSMGSGKRGRRVGLTQRAY.

The span at 1–30 shows a compositional bias: acidic residues; sequence MSDDDFMQDSDQEYDFEYEDDEEEDTGDVD. Residues 1-32 are disordered; the sequence is MSDDDFMQDSDQEYDFEYEDDEEEDTGDVDIE. The region spanning 250 to 418 is the PCI domain; the sequence is SEENWKEAQS…GVLELESRED (169 aa). The tract at residues 469-490 is disordered; that stretch reads DTMRSMGSGKRGRRVGLTQRAY.

This sequence belongs to the CSN2 family. As to quaternary structure, component of the COP9 signalosome (CSN) complex.

The protein localises to the cytoplasm. Its subcellular location is the nucleus. Functionally, component of the COP9 signalosome (CSN) complex that acts as an regulator of the ubiquitin (Ubl) conjugation pathway by mediating the deneddylation of the cullin subunit of SCF-type E3 ubiquitin-protein ligase complexes. The CSN complex is involved in the regulation of the circadian clock through its control of the stability of the SCF(FWD-1) complex. The chain is COP9 signalosome complex subunit 2 (csn-2) from Neurospora crassa (strain ATCC 24698 / 74-OR23-1A / CBS 708.71 / DSM 1257 / FGSC 987).